Reading from the N-terminus, the 388-residue chain is tRNA (guanine-N(7)-)-methyltransferase (388 aa).

Glu-129, Glu-154, and Asp-181 together coordinate S-adenosyl-L-methionine. Residues Lys-207 and Asp-237 each contribute to the substrate site.

Belongs to the class I-like SAM-binding methyltransferase superfamily. TrmB family.

The enzyme catalyses guanosine(46) in tRNA + S-adenosyl-L-methionine = N(7)-methylguanosine(46) in tRNA + S-adenosyl-L-homocysteine. It participates in tRNA modification; N(7)-methylguanine-tRNA biosynthesis. In terms of biological role, catalyzes the formation of N(7)-methylguanine at position 46 (m7G46) in tRNA. This is tRNA (guanine-N(7)-)-methyltransferase from Wolinella succinogenes (strain ATCC 29543 / DSM 1740 / CCUG 13145 / JCM 31913 / LMG 7466 / NCTC 11488 / FDC 602W) (Vibrio succinogenes).